Consider the following 338-residue polypeptide: Sporulation protein YdcC (338 aa).

A helical transmembrane segment spans residues 8-25 (FVLLLTGLLAVLILSACG).

The protein resides in the cell membrane. Functionally, required for efficient sporulation. The polypeptide is Sporulation protein YdcC (ydcC) (Bacillus subtilis (strain 168)).